The sequence spans 397 residues: Cathepsin E (397 aa).

The first 20 residues, 1 to 20 (MKPLLVLLLLLLLDLAQAQG), serve as a signal peptide directing secretion. Positions 21-59 (ALHRVPLRRHQSLRKKLRAQGQLSEFWRSHNLDMTRLSE) are cleaved as a propeptide — activation peptide. Residues 79 to 393 (YFGTISIGTP…DRGNNQVGLA (315 aa)) enclose the Peptidase A1 domain. N91 carries N-linked (GlcNAc...) asparagine glycosylation. Residue D97 is part of the active site. 2 disulfides stabilise this stretch: C110–C115 and C273–C277. Residue D282 is part of the active site. N-linked (GlcNAc...) asparagine glycosylation occurs at N323.

The protein belongs to the peptidase A1 family. As to quaternary structure, homodimer; disulfide-linked. Glycosylated. The nature of the carbohydrate chain varies between cell types. In fibroblasts, the proenzyme contains a high mannose-type oligosaccharide, while the mature enzyme contains a complex-type oligosaccharide. In terms of tissue distribution, expressed abundantly in the stomach, club cells and alveolar macrophages of the lung, brain microglia, spleen and activated B-lymphocytes. Not expressed in resting B-lymphocytes.

The protein localises to the endosome. The catalysed reaction is Similar to cathepsin D, but slightly broader specificity.. Its function is as follows. May have a role in immune function. Probably involved in the processing of antigenic peptides during MHC class II-mediated antigen presentation. May play a role in activation-induced lymphocyte depletion in the thymus, and in neuronal degeneration and glial cell activation in the brain. The chain is Cathepsin E (Ctse) from Mus musculus (Mouse).